The primary structure comprises 235 residues: Small ribosomal subunit protein uS2 (235 aa).

The protein belongs to the universal ribosomal protein uS2 family.

The polypeptide is Small ribosomal subunit protein uS2 (Geobacillus thermodenitrificans (strain NG80-2)).